The primary structure comprises 172 residues: 3-hydroxydecanoyl-[acyl-carrier-protein] dehydratase (172 aa).

Histidine 71 is an active-site residue.

It belongs to the thioester dehydratase family. FabA subfamily. Homodimer.

The protein resides in the cytoplasm. It catalyses the reaction a (3R)-hydroxyacyl-[ACP] = a (2E)-enoyl-[ACP] + H2O. The enzyme catalyses (3R)-hydroxydecanoyl-[ACP] = (2E)-decenoyl-[ACP] + H2O. It carries out the reaction (2E)-decenoyl-[ACP] = (3Z)-decenoyl-[ACP]. It functions in the pathway lipid metabolism; fatty acid biosynthesis. Its function is as follows. Necessary for the introduction of cis unsaturation into fatty acids. Catalyzes the dehydration of (3R)-3-hydroxydecanoyl-ACP to E-(2)-decenoyl-ACP and then its isomerization to Z-(3)-decenoyl-ACP. Can catalyze the dehydratase reaction for beta-hydroxyacyl-ACPs with saturated chain lengths up to 16:0, being most active on intermediate chain length. In Brucella anthropi (strain ATCC 49188 / DSM 6882 / CCUG 24695 / JCM 21032 / LMG 3331 / NBRC 15819 / NCTC 12168 / Alc 37) (Ochrobactrum anthropi), this protein is 3-hydroxydecanoyl-[acyl-carrier-protein] dehydratase.